Consider the following 132-residue polypeptide: Ribonuclease P protein component (132 aa).

The protein belongs to the RnpA family. Consists of a catalytic RNA component (M1 or rnpB) and a protein subunit.

It catalyses the reaction Endonucleolytic cleavage of RNA, removing 5'-extranucleotides from tRNA precursor.. RNaseP catalyzes the removal of the 5'-leader sequence from pre-tRNA to produce the mature 5'-terminus. It can also cleave other RNA substrates such as 4.5S RNA. The protein component plays an auxiliary but essential role in vivo by binding to the 5'-leader sequence and broadening the substrate specificity of the ribozyme. In Marinomonas sp. (strain MWYL1), this protein is Ribonuclease P protein component.